Reading from the N-terminus, the 327-residue chain is Ankyrin repeat domain-containing protein SOWAHD (327 aa).

Residues 1–31 are disordered; that stretch reads MAQALEDGNPLPKASNRPAESEAPSDPQIKD. 3 ANK repeats span residues 112–141, 147–162, and 186–216; these read CLEP…AEPS, DPIT…AKHG, and PGSG…LGAD. The tract at residues 251–311 is disordered; it reads ERDRKRENAN…EKKASSTQEG (61 aa). Residues 260 to 275 show a composition bias toward low complexity; that stretch reads NNNSSRTTTTTTTTSR. Basic and acidic residues predominate over residues 292-305; sequence HYKEASQPVKEKKA.

The protein belongs to the SOWAH family.

The protein is Ankyrin repeat domain-containing protein SOWAHD (Sowahd) of Mus musculus (Mouse).